The sequence spans 432 residues: MNDFIKLAPIKKIQGTIHLPGSKSISNRALLLAAQATGTTQLTNLLDSDDVRCMLDALRNLGVSYCLSNNRKTCEINGIGGPIQSKNNNQLILSLGNAGTVMRPLIAALSVQTQNIVLTGHPRMKDRPIAHLVDALRQGGARIEYMERNGYPPIRLYGGYYGGEIFIKGSISSQFLSSVLMMTPLAYRDTLIKVDGALVSRPYIDITLSLMKIFGINIQHDNYRVFYCKGNMAYQSPGDYLVEGDASSASYFLAASAIRGGTVRVIGVGRNSKQGDIYFANILESMGAKIAWGDNYIECTRGADLNAVDLDVNNIPDAAMTLAITALFSINGPTILRNIYNWRVKESDRLAAMATELRKIGAEIVEGYDYLQITPPFKIESAYINTYDDHRIAMCFSLVALSDVSIIINNPKCTDKTFPDFFTQLSSISVLQ.

Residues Lys-23, Ser-24, and Arg-28 each coordinate 3-phosphoshikimate. Lys-23 is a phosphoenolpyruvate binding site. Positions 99 and 127 each coordinate phosphoenolpyruvate. Residues Ser-172, Ser-173, Gln-174, Ser-200, Asp-317, Asn-341, and Lys-345 each contribute to the 3-phosphoshikimate site. Residue Gln-174 participates in phosphoenolpyruvate binding. The active-site Proton acceptor is Asp-317. Residues Arg-349, Arg-391, and Lys-416 each contribute to the phosphoenolpyruvate site.

The protein belongs to the EPSP synthase family. Monomer.

It localises to the cytoplasm. It catalyses the reaction 3-phosphoshikimate + phosphoenolpyruvate = 5-O-(1-carboxyvinyl)-3-phosphoshikimate + phosphate. It functions in the pathway metabolic intermediate biosynthesis; chorismate biosynthesis; chorismate from D-erythrose 4-phosphate and phosphoenolpyruvate: step 6/7. Functionally, catalyzes the transfer of the enolpyruvyl moiety of phosphoenolpyruvate (PEP) to the 5-hydroxyl of shikimate-3-phosphate (S3P) to produce enolpyruvyl shikimate-3-phosphate and inorganic phosphate. This is 3-phosphoshikimate 1-carboxyvinyltransferase from Blochmanniella pennsylvanica (strain BPEN).